A 324-amino-acid chain; its full sequence is Proto-oncogene Mas (324 aa).

Topologically, residues 1 to 35 are extracellular; that stretch reads MDQSNMTSFAEEKAMNTSSRNASLGTSHPPIPIVH. N-linked (GlcNAc...) asparagine glycans are attached at residues Asn-5, Asn-16, and Asn-21. A helical membrane pass occupies residues 36–60; sequence WVIMSISPLGFVENGILLWFLCFRM. Topologically, residues 61 to 64 are cytoplasmic; the sequence is RRNP. The chain crosses the membrane as a helical span at residues 65–86; that stretch reads FTVYITHLSIADISLLFCIFIL. The Extracellular segment spans residues 87–103; the sequence is SIDYALDYELSSGHYYT. Residues 104–127 form a helical membrane-spanning segment; the sequence is IVTLSVTFLFGYNTGLYLLTAISV. The Cytoplasmic portion of the chain corresponds to 128 to 148; the sequence is ERCLSVLYPIWYRCHRPKHQS. A helical membrane pass occupies residues 149-171; the sequence is AFVCALLWALSCLVTTMEYVMCI. The Extracellular portion of the chain corresponds to 172 to 184; it reads DSGEESHSQSDCR. A helical membrane pass occupies residues 185 to 205; sequence AVIIFIAILSFLVFTPLMLVS. At 206-223 the chain is on the cytoplasmic side; the sequence is STILVVKIRKNTWASHSS. A helical membrane pass occupies residues 224–244; sequence KLYIVIMVTIIIFLIFAMPMR. Topologically, residues 245-262 are extracellular; that stretch reads VLYLLYYEYWSTFGNLHN. The chain crosses the membrane as a helical span at residues 263–283; sequence ISLLFSTINSSANPFIYFFVG. The Cytoplasmic segment spans residues 284–324; that stretch reads SSKKKRFRESLKVVLTRAFKDEMQPRRQEGNGNTVSIETVV.

The protein belongs to the G-protein coupled receptor 1 family. In terms of assembly, interacts with AGTR1. Interacts with FLNA (via filamin repeat 21); increases PKA-mediated phosphorylation of FLNA. Expressed in platelets.

The protein localises to the cell membrane. Its function is as follows. Receptor for angiotensin 1-7. Acts specifically as a functional antagonist of AGTR1 (angiotensin-2 type 1 receptor), although it up-regulates AGTR1 receptor levels. Positive regulation of AGTR1 levels occurs through activation of the G-proteins GNA11 and GNAQ, and stimulation of the protein kinase C signaling cascade. The antagonist effect on AGTR1 function is probably due to AGTR1 being physically altered by MAS1. The polypeptide is Proto-oncogene Mas (Mas1) (Rattus norvegicus (Rat)).